A 375-amino-acid polypeptide reads, in one-letter code: 4,4'-diaponeurosporenoate glycosyltransferase (375 aa).

A run of 4 helical transmembrane segments spans residues 3–23 (WLSR…ALIF), 164–184 (FYEG…NVFS), 277–297 (IMTA…GLCL), and 330–350 (FSNL…KIFI).

It belongs to the glycosyltransferase 2 family. CrtQ subfamily.

Its subcellular location is the cell membrane. Its pathway is carotenoid biosynthesis; staphyloxanthin biosynthesis; staphyloxanthin from farnesyl diphosphate: step 4/5. Its function is as follows. Catalyzes the glycosylation of 4,4'-diaponeurosporenoate, i.e. the esterification of glucose at the C1'' position with the carboxyl group of 4,4'-diaponeurosporenic acid, to form glycosyl-4,4'-diaponeurosporenoate. This is a step in the biosynthesis of staphyloxanthin, an orange pigment present in most staphylococci strains. The chain is 4,4'-diaponeurosporenoate glycosyltransferase (crtQ) from Staphylococcus aureus (strain USA300).